The primary structure comprises 326 residues: Aspartate carbamoyltransferase catalytic subunit (326 aa).

Carbamoyl phosphate-binding residues include Arg-76 and Thr-77. Lys-104 contacts L-aspartate. Carbamoyl phosphate is bound by residues Arg-126, His-156, and Gln-159. Positions 189 and 244 each coordinate L-aspartate. Carbamoyl phosphate is bound by residues Gly-285 and Pro-286.

This sequence belongs to the aspartate/ornithine carbamoyltransferase superfamily. ATCase family. In terms of assembly, heterododecamer (2C3:3R2) of six catalytic PyrB chains organized as two trimers (C3), and six regulatory PyrI chains organized as three dimers (R2).

The catalysed reaction is carbamoyl phosphate + L-aspartate = N-carbamoyl-L-aspartate + phosphate + H(+). The protein operates within pyrimidine metabolism; UMP biosynthesis via de novo pathway; (S)-dihydroorotate from bicarbonate: step 2/3. In terms of biological role, catalyzes the condensation of carbamoyl phosphate and aspartate to form carbamoyl aspartate and inorganic phosphate, the committed step in the de novo pyrimidine nucleotide biosynthesis pathway. The protein is Aspartate carbamoyltransferase catalytic subunit of Polynucleobacter asymbioticus (strain DSM 18221 / CIP 109841 / QLW-P1DMWA-1) (Polynucleobacter necessarius subsp. asymbioticus).